Reading from the N-terminus, the 473-residue chain is Argininosuccinate lyase (473 aa).

N-acetylalanine is present on Ala2. Lys7 bears the N6-acetyllysine mark. Ser27 is a binding site for 2-(N(omega)-L-arginino)succinate. Position 69 is an N6-acetyllysine (Lys69). Residues Asn114 and Thr159 each contribute to the 2-(N(omega)-L-arginino)succinate site. The active-site Proton acceptor is the His160. The active-site Proton donor is the Ser281. Position 288 is an N6-acetyllysine (Lys288). 2-(N(omega)-L-arginino)succinate-binding residues include Asn289, Tyr321, Gln326, and Lys329.

It belongs to the lyase 1 family. Argininosuccinate lyase subfamily. As to quaternary structure, homotetramer. Forms tissue-specific complexes with ASS1, SLC7A1, HSP90AA1 and nitric oxide synthase NOS1, NOS2 or NOS3; the complex maintenance is independent of ASL catalytic function. In terms of processing, acetylation modifies enzyme activity in response to alterations of extracellular nutrient availability. Acetylation increased with trichostin A (TSA) or with nicotinamide (NAM). Glucose increases acetylation by about a factor of 3 with decreasing enzyme activity. Acetylation on Lys-288 is decreased on the addition of extra amino acids resulting in activation of enzyme activity.

The enzyme catalyses 2-(N(omega)-L-arginino)succinate = fumarate + L-arginine. Its pathway is amino-acid biosynthesis; L-arginine biosynthesis; L-arginine from L-ornithine and carbamoyl phosphate: step 3/3. It functions in the pathway nitrogen metabolism; urea cycle; L-arginine and fumarate from (N(omega)-L-arginino)succinate: step 1/1. With respect to regulation, enzyme activity is regulated by acetylation. In terms of biological role, catalyzes the reversible cleavage of L-argininosuccinate to fumarate and L-arginine, an intermediate step reaction in the urea cycle mostly providing for hepatic nitrogen detoxification into excretable urea as well as de novo L-arginine synthesis in nonhepatic tissues. Essential regulator of intracellular and extracellular L-arginine pools. As part of citrulline-nitric oxide cycle, forms tissue-specific multiprotein complexes with argininosuccinate synthase ASS1, transport protein SLC7A1 and nitric oxide synthase NOS1, NOS2 or NOS3, allowing for cell-autonomous L-arginine synthesis while channeling extracellular L-arginine to nitric oxide synthesis pathway. This is Argininosuccinate lyase (ASL) from Bos taurus (Bovine).